A 227-amino-acid polypeptide reads, in one-letter code: ATP-dependent dethiobiotin synthetase BioD (227 aa).

13-18 (EVGKSV) provides a ligand contact to ATP. Mg(2+) is bound at residue Ser17. Residue Lys38 is part of the active site. Residue Ser42 participates in substrate binding. ATP is bound by residues Asp55, 116–119 (EGAG), and 176–177 (ND). 2 residues coordinate Mg(2+): Asp55 and Glu116.

The protein belongs to the dethiobiotin synthetase family. As to quaternary structure, homodimer. Mg(2+) is required as a cofactor.

Its subcellular location is the cytoplasm. It catalyses the reaction (7R,8S)-7,8-diammoniononanoate + CO2 + ATP = (4R,5S)-dethiobiotin + ADP + phosphate + 3 H(+). Its pathway is cofactor biosynthesis; biotin biosynthesis; biotin from 7,8-diaminononanoate: step 1/2. Its function is as follows. Catalyzes a mechanistically unusual reaction, the ATP-dependent insertion of CO2 between the N7 and N8 nitrogen atoms of 7,8-diaminopelargonic acid (DAPA, also called 7,8-diammoniononanoate) to form a ureido ring. The polypeptide is ATP-dependent dethiobiotin synthetase BioD (Serratia marcescens).